The primary structure comprises 490 residues: Sushi domain-containing protein 4 (490 aa).

Residues 1-20 (MYHGMNPSNGDGFLEQQLQQ) are disordered. The N-terminal stretch at 1-41 (MYHGMNPSNGDGFLEQQLQQQQPQSPQRLLAVILWFQLALC) is a signal peptide. The Extracellular segment spans residues 42–319 (FGPAQLTGGF…PSTHETLLTT (278 aa)). Sushi domains are found at residues 55–119 (NVCA…VCIQ), 120–179 (EDCR…ICQG), 178–239 (QGCL…RCLA), and 241–304 (EVCP…YCIK). 8 disulfide bridges follow: Cys-57–Cys-99, Cys-85–Cys-117, Cys-122–Cys-165, Cys-147–Cys-177, Cys-180–Cys-224, Cys-210–Cys-237, Cys-243–Cys-289, and Cys-274–Cys-302. 2 N-linked (GlcNAc...) asparagine glycosylation sites follow: Asn-104 and Asn-134. Asn-192 carries N-linked (GlcNAc...) asparagine glycosylation. Residues 320–340 (WKIVAFTATSVLLVLLLVILA) traverse the membrane as a helical segment. The Cytoplasmic segment spans residues 341–490 (RMFQTKFKAH…DEIPLMEEDP (150 aa)). The interval 394 to 490 (YPASVGQGCP…DEIPLMEEDP (97 aa)) is disordered. Composition is skewed to polar residues over residues 430 to 444 (CDSTSGSSEMLQSLY) and 461 to 475 (DTISSTAGEVASTSP). Residues 479-490 (IADEIPLMEEDP) show a composition bias toward acidic residues.

As to expression, high expression in brain and eye, with weaker expression in spinal cord and testis. Detected in white matter of brain and in the outer segments of photoreceptors.

It localises to the membrane. Its function is as follows. Acts as a complement inhibitor by disrupting the formation of the classical C3 convertase. Isoform 3 inhibits the classical complement pathway, while membrane-bound isoform 1 inhibits deposition of C3b via both the classical and alternative complement pathways. The polypeptide is Sushi domain-containing protein 4 (Susd4) (Mus musculus (Mouse)).